Here is a 54-residue protein sequence, read N- to C-terminus: UPF0391 membrane protein Pfl01_0044 (54 aa).

Helical transmembrane passes span Trp4–Ala24 and Gly29–Gly49.

This sequence belongs to the UPF0391 family.

The protein localises to the cell membrane. This Pseudomonas fluorescens (strain Pf0-1) protein is UPF0391 membrane protein Pfl01_0044.